We begin with the raw amino-acid sequence, 151 residues long: Small heat shock protein HspH (151 aa).

In terms of domain architecture, sHSP spans 28–138; it reads RAGEDNYPPY…KPRRIAINAA (111 aa).

This sequence belongs to the small heat shock protein (HSP20) family.

This chain is Small heat shock protein HspH (hspH), found in Bradyrhizobium diazoefficiens (strain JCM 10833 / BCRC 13528 / IAM 13628 / NBRC 14792 / USDA 110).